Consider the following 448-residue polypeptide: Vacuolar amino acid transporter 6 (448 aa).

Topologically, residues 1 to 7 are cytoplasmic; sequence MVASIRS. Residues 8–28 form a helical membrane-spanning segment; that stretch reads GVLTLLHTACGAGILAMPYAF. Residues 29-32 lie on the Vacuolar side of the membrane; that stretch reads KPFG. Residues 33–53 traverse the membrane as a helical segment; it reads LIPGVIMIVLCGACAMQSLFI. The Cytoplasmic portion of the chain corresponds to 54–80; it reads QARVAKYVPQGRASFSALTRLINPNLG. Residues 81–101 form a helical membrane-spanning segment; it reads IVFDLAIAIKCFGVGVSYMIV. At 102 to 125 the chain is on the vacuolar side; it reads VGDLMPQIMSVWTRNAWLLNRNVQ. A helical membrane pass occupies residues 126–146; that stretch reads ISLIMLFFVAPLSFLKKLNSL. The Cytoplasmic portion of the chain corresponds to 147-150; the sequence is RYAS. Residues 151–171 traverse the membrane as a helical segment; that stretch reads MVAISSVAYLCVLVLLHYVAP. Topologically, residues 172–195 are vacuolar; sequence SDEILRLKGRISYLLPPQSHDLNV. The helical transmembrane segment at 196–216 threads the bilayer; it reads LNTLPIFVFAYTCHHNMFSII. Over 217–229 the chain is Cytoplasmic; that stretch reads NEQRSSRFEHVMK. A helical transmembrane segment spans residues 230–250; sequence IPLIAISLALILYIAIGCAGY. Residues 251–267 are Vacuolar-facing; it reads LTFGDNIIGNIIMLYPQ. Residues 268 to 288 traverse the membrane as a helical segment; that stretch reads AVSSTIGRIAIVLLVMLAFPL. The Cytoplasmic segment spans residues 289–357; it reads QCHPARASIH…PKETPLRGKS (69 aa). Position 344 is a phosphoserine (S344). The chain crosses the membrane as a helical span at residues 358–378; it reads FIVITCSILVASYLVAISVSS. At 379–381 the chain is on the vacuolar side; sequence LAR. Residues 382–402 traverse the membrane as a helical segment; sequence VLAIVGATGSTSISFILPGLF. The Cytoplasmic segment spans residues 403–424; that stretch reads GYKLIGTEHKTAVPLTTKIFKY. A helical membrane pass occupies residues 425–445; the sequence is TGLLLFIWGLIIMITCLTAAL. The Vacuolar portion of the chain corresponds to 446–448; the sequence is KLN.

It belongs to the amino acid/polyamine transporter 2 family.

It localises to the vacuole membrane. Functionally, involved in amino acid efflux from the vacuole to the cytoplasm. Capable of transporting aspartate and glutamate. Requires ATP for function. The chain is Vacuolar amino acid transporter 6 (AVT6) from Saccharomyces cerevisiae (strain ATCC 204508 / S288c) (Baker's yeast).